Consider the following 340-residue polypeptide: Methionine import ATP-binding protein MetN 1 (340 aa).

The region spanning I2 to V242 is the ABC transporter domain. G39–S46 contacts ATP.

The protein belongs to the ABC transporter superfamily. Methionine importer (TC 3.A.1.24) family. In terms of assembly, the complex is composed of two ATP-binding proteins (MetN), two transmembrane proteins (MetI) and a solute-binding protein (MetQ).

It is found in the cell inner membrane. It catalyses the reaction L-methionine(out) + ATP + H2O = L-methionine(in) + ADP + phosphate + H(+). The catalysed reaction is D-methionine(out) + ATP + H2O = D-methionine(in) + ADP + phosphate + H(+). Part of the ABC transporter complex MetNIQ involved in methionine import. Responsible for energy coupling to the transport system. The chain is Methionine import ATP-binding protein MetN 1 from Pectobacterium atrosepticum (strain SCRI 1043 / ATCC BAA-672) (Erwinia carotovora subsp. atroseptica).